The primary structure comprises 307 residues: Ribonuclease Z (307 aa).

Residues His-63, His-65, Asp-67, His-68, His-140, Asp-211, and His-269 each contribute to the Zn(2+) site. The active-site Proton acceptor is the Asp-67.

Belongs to the RNase Z family. As to quaternary structure, homodimer. Zn(2+) is required as a cofactor.

It carries out the reaction Endonucleolytic cleavage of RNA, removing extra 3' nucleotides from tRNA precursor, generating 3' termini of tRNAs. A 3'-hydroxy group is left at the tRNA terminus and a 5'-phosphoryl group is left at the trailer molecule.. Zinc phosphodiesterase, which displays some tRNA 3'-processing endonuclease activity. Probably involved in tRNA maturation, by removing a 3'-trailer from precursor tRNA. This is Ribonuclease Z from Bacillus subtilis (strain 168).